A 354-amino-acid polypeptide reads, in one-letter code: Phosphoribosylformylglycinamidine cyclo-ligase (354 aa).

This sequence belongs to the AIR synthase family.

The protein localises to the cytoplasm. The enzyme catalyses 2-formamido-N(1)-(5-O-phospho-beta-D-ribosyl)acetamidine + ATP = 5-amino-1-(5-phospho-beta-D-ribosyl)imidazole + ADP + phosphate + H(+). Its pathway is purine metabolism; IMP biosynthesis via de novo pathway; 5-amino-1-(5-phospho-D-ribosyl)imidazole from N(2)-formyl-N(1)-(5-phospho-D-ribosyl)glycinamide: step 2/2. This Marinobacter nauticus (strain ATCC 700491 / DSM 11845 / VT8) (Marinobacter aquaeolei) protein is Phosphoribosylformylglycinamidine cyclo-ligase.